The primary structure comprises 260 residues: Creatinine amidohydrolase (260 aa).

A Mn(2+)-binding site is contributed by glutamate 34. Zn(2+)-binding residues include glutamate 34, histidine 36, and aspartate 45. Residue aspartate 45 participates in Mn(2+) binding. Serine 78 lines the creatine pocket. Residue histidine 120 participates in Mn(2+) binding. Zn(2+) is bound at residue histidine 120. Creatine contacts are provided by tyrosine 121, tryptophan 174, aspartate 175, and histidine 178. Position 183 (glutamate 183) interacts with Zn(2+).

Belongs to the creatininase superfamily. As to quaternary structure, homohexamer; trimer of dimers. It depends on Zn(2+) as a cofactor. The cofactor is Mn(2+).

The enzyme catalyses creatinine + H2O = creatine. The protein operates within amine and polyamine degradation; creatinine degradation. With respect to regulation, is markedly inactivated in vitro by heavy metal ions, N-bromosuccinimide, ethoxyformic anhydride, and dye-sensitized photooxidation. Functionally, cyclic amidohydrolase that catalyzes the reversible conversion of creatinine to creatine. Is also active toward glycocyamidine, though the reaction rate is very low, but it is completely inert toward hydantoin and its derivatives. The chain is Creatinine amidohydrolase (crnA) from Pseudomonas putida (Arthrobacter siderocapsulatus).